An 845-amino-acid chain; its full sequence is MGPRALSPLASLRLRWLLACGLLGPVLEAGRPDLEQTVHLSSYEIITPWRLTRERREALGPSSQQISYVIQAQGKQHIIHLERNTDLLPNDFVVYTYDKEGSLLSDHPNVQSHCHYRGYVEGVQNSAVAVSACFGLRGLLHLENASFGIEPLHNSSHFEHIFYPMDGIHQEPLRCGVSNRDTEKEGTQGDEEEHPSVTQLLRRRRAVLPQTRYVELFIVVDKERYDMMGRNQTAVREEMIRLANYLDSMYIMLNIRIVLVGLEIWTDRNPINIIGGAGDVLGNFVQWREKFLITRWRHDSAQLVLKKGFGGTAGMAFVGTVCSRSHAGGINVFGQITVETFASIVAHELGHNLGMNHDDGRECFCGAKSCIMNSGASGSRNFSSCSAEDFEKLTLNKGGSCLLNIPKPDEAYSAPSCGNKLVDPGEECDCGTAKECEVDPCCEGSTCKLKSFAECAYGDCCKDCQFLPGGSMCRGKTSECDVPEYCNGSSQFCPPDVFIQNGYPCQNSKAYCYNGMCQYYDAQCQVIFGSKAKAAPRDCFIEVNSKGDRFGNCGFSGSEYKKCATGNALCGKLQCENVQDMPVFGIVPAIIQTPSRGTKCWGVDFQLGSDVPDPGMVNEGTKCDAGKICRNFQCVNASVLNYDCDIQGKCHGHGVCNSNKNCHCEDGWAPPHCDTKGYGGSVDSGPTYNAKSTALRDGLLVFFFLIVPLVAAAIFLFIKRDELRKTFRKKRSQMSDGRNQANVSRQPGDPSISRPPGGPNVSRPPGGPGVSRPPGGPGVSRPPGGPGVSRPPPGHGNRFPVPTYAAKQPAQFPSRPPPPQPKISSQGNLIPARPAPAPPLYSSLT.

A signal peptide spans 1–29 (MGPRALSPLASLRLRWLLACGLLGPVLEA). Residues 30–697 (GRPDLEQTVH…YNAKSTALRD (668 aa)) lie on the Extracellular side of the membrane. 3 N-linked (GlcNAc...) asparagine glycosylation sites follow: Asn144, Asn154, and Asn231. Residues 212–406 (RYVELFIVVD…KGGSCLLNIP (195 aa)) enclose the Peptidase M12B domain. Disulfide bonds link Cys322–Cys401, Cys363–Cys385, Cys365–Cys370, and Cys473–Cys493. A Zn(2+)-binding site is contributed by His347. Residue Glu348 is part of the active site. The Zn(2+) site is built by His351 and His357. Asn381, Asn487, and Asn636 each carry an N-linked (GlcNAc...) asparagine glycan. The Disintegrin domain maps to 414-501 (APSCGNKLVD…FCPPDVFIQN (88 aa)). 3 cysteine pairs are disulfide-bonded: Cys644–Cys656, Cys650–Cys662, and Cys664–Cys673. In terms of domain architecture, EGF-like spans 644 to 698 (CDIQGKCHGHGVCNSNKNCHCEDGWAPPHCDTKGYGGSVDSGPTYNAKSTALRDG). The helical transmembrane segment at 698–718 (GLLVFFFLIVPLVAAAIFLFI) threads the bilayer. The Cytoplasmic portion of the chain corresponds to 719–845 (KRDELRKTFR…PAPPLYSSLT (127 aa)). The segment at 729–845 (KKRSQMSDGR…PAPPLYSSLT (117 aa)) is disordered. Over residues 734-745 (MSDGRNQANVSR) the composition is skewed to polar residues. The segment covering 783–794 (PGGPGVSRPPPG) has biased composition (pro residues).

Interacts with SH3GL2 and SNX9 through its cytoplasmic tail. Interacts with ITGA6. Zn(2+) serves as cofactor. In terms of processing, proteolytically cleaved in the trans-Golgi network before it reaches the plasma membrane to generate a mature protein. The removal of the pro-domain occurs via cleavage at two different sites. Processed most likely by a pro-protein convertase such as furin, at the boundary between the pro-domain and the catalytic domain. An additional upstream cleavage pro-protein convertase site (Arg-56/Glu-57) has an important role in the activation of ADAM9. Post-translationally, phosphorylation is induced in vitro by phorbol-12-myristate-13-acetate (PMA).

The protein resides in the cell membrane. With respect to regulation, synthesized as an inactive form which is proteolytically cleaved to generate an active enzyme. Processing at the upstream site is particularly important for activation of the proenzyme, whereas processing at the boundary between the pro-domain and the catalytic domain does not appear to be essential. Inhibited by hydroxamic acid-based inhibitors. Functionally, metalloprotease that cleaves and releases a number of molecules with important roles in tumorigenesis and angiogenesis, such as TEK, KDR, EPHB4, CD40, VCAM1 and CDH5. May mediate cell-cell, cell-matrix interactions and regulate the motility of cells via interactions with integrins. The polypeptide is Disintegrin and metalloproteinase domain-containing protein 9 (Mus musculus (Mouse)).